The chain runs to 185 residues: Probable chorismate pyruvate-lyase (185 aa).

The substrate site is built by Arg84, Leu122, and Glu178.

The protein belongs to the UbiC family.

Its subcellular location is the cytoplasm. It catalyses the reaction chorismate = 4-hydroxybenzoate + pyruvate. It functions in the pathway cofactor biosynthesis; ubiquinone biosynthesis. In terms of biological role, removes the pyruvyl group from chorismate, with concomitant aromatization of the ring, to provide 4-hydroxybenzoate (4HB) for the ubiquinone pathway. This chain is Probable chorismate pyruvate-lyase, found in Hydrogenovibrio crunogenus (strain DSM 25203 / XCL-2) (Thiomicrospira crunogena).